Here is a 353-residue protein sequence, read N- to C-terminus: METNFSIPLNETEEVLPEPAGHTVLWIFSLLVHGVTFVFGVLGNGLVIWVAGFRMTRTVNTICYLNLALADFSFSAILPFRMVSVAMREKWPFGSFLCKLVHVMIDINLFVSVYLITIIALDRCICVLHPAWAQNHRTMSLAKRVMTGLWIFTIVLTLPNFIFWTTISTTNGDTYCIFNFAFWGDTAVERLNVFITMAKVFLILHFIIGFSVPMSIITVCYGIIAAKIHRNHMIKSSRPLRVFAAVVASFFICWFPYELIGILMAVWLKEMLLNGKYKIILVLINPTSSLAFFNSCLNPILYVFMGRNFQERLIRSLPTSLERALTEVPDSAQTSNTDTTSASPPEETELQAM.

The Extracellular portion of the chain corresponds to 1–27; sequence METNFSIPLNETEEVLPEPAGHTVLWI. N-linked (GlcNAc...) asparagine glycosylation is found at asparagine 4 and asparagine 10. Residues 28–50 traverse the membrane as a helical segment; that stretch reads FSLLVHGVTFVFGVLGNGLVIWV. Over 51–61 the chain is Cytoplasmic; the sequence is AGFRMTRTVNT. The helical transmembrane segment at 62 to 83 threads the bilayer; it reads ICYLNLALADFSFSAILPFRMV. Residues 84–100 are Extracellular-facing; that stretch reads SVAMREKWPFGSFLCKL. The cysteines at positions 98 and 176 are disulfide-linked. A helical membrane pass occupies residues 101 to 121; sequence VHVMIDINLFVSVYLITIIAL. Residues 122–140 are Cytoplasmic-facing; that stretch reads DRCICVLHPAWAQNHRTMS. Residues 141–162 traverse the membrane as a helical segment; the sequence is LAKRVMTGLWIFTIVLTLPNFI. At 163–205 the chain is on the extracellular side; the sequence is FWTTISTTNGDTYCIFNFAFWGDTAVERLNVFITMAKVFLILH. A helical membrane pass occupies residues 206-226; that stretch reads FIIGFSVPMSIITVCYGIIAA. The Cytoplasmic portion of the chain corresponds to 227–242; it reads KIHRNHMIKSSRPLRV. A helical membrane pass occupies residues 243-266; that stretch reads FAAVVASFFICWFPYELIGILMAV. Residues 267–286 lie on the Extracellular side of the membrane; sequence WLKEMLLNGKYKIILVLINP. Residues 287 to 306 form a helical membrane-spanning segment; sequence TSSLAFFNSCLNPILYVFMG. The Cytoplasmic segment spans residues 307–353; it reads RNFQERLIRSLPTSLERALTEVPDSAQTSNTDTTSASPPEETELQAM. Positions 327–353 are disordered; it reads EVPDSAQTSNTDTTSASPPEETELQAM. Positions 331–343 are enriched in polar residues; that stretch reads SAQTSNTDTTSAS.

The protein belongs to the G-protein coupled receptor 1 family. In terms of tissue distribution, detected in various tissues with highest expression in lung.

It localises to the cell membrane. In terms of biological role, low affinity receptor for N-formyl-methionyl peptides, which are powerful neutrophils chemotactic factors. Binding of FMLP to the receptor causes activation of neutrophils. This response is mediated via a G-protein that activates a phosphatidylinositol-calcium second messenger system. Acts as a receptor for humanin. This Homo sapiens (Human) protein is N-formyl peptide receptor 3 (FPR3).